Here is a 344-residue protein sequence, read N- to C-terminus: Phenylalanine--tRNA ligase alpha subunit (344 aa).

E256 is a Mg(2+) binding site.

This sequence belongs to the class-II aminoacyl-tRNA synthetase family. Phe-tRNA synthetase alpha subunit type 1 subfamily. Tetramer of two alpha and two beta subunits. Requires Mg(2+) as cofactor.

The protein resides in the cytoplasm. The catalysed reaction is tRNA(Phe) + L-phenylalanine + ATP = L-phenylalanyl-tRNA(Phe) + AMP + diphosphate + H(+). The polypeptide is Phenylalanine--tRNA ligase alpha subunit (Anoxybacillus flavithermus (strain DSM 21510 / WK1)).